Here is a 360-residue protein sequence, read N- to C-terminus: Photosystem II protein D1 (360 aa).

3 helical membrane passes run 30–47 (YVGW…AATT), 119–134 (HFLI…QWEL), and 143–157 (WICV…AAFA). His119 is a binding site for chlorophyll a. Tyr127 serves as a coordination point for pheophytin a. The [CaMn4O5] cluster site is built by Asp171 and Glu190. A helical transmembrane segment spans residues 198–219 (FHMAGVAGMFGGALFSAMHGSL). His199 is a chlorophyll a binding site. A quinone-binding positions include His216 and 265–266 (SF). His216 provides a ligand contact to Fe cation. His273 is a binding site for Fe cation. A helical membrane pass occupies residues 275-289 (FLASWPVICVWLTSM). 4 residues coordinate [CaMn4O5] cluster: His333, Glu334, Asp343, and Ala345. Positions 346–360 (AAESTSVALVAPAIG) are excised as a propeptide.

It belongs to the reaction center PufL/M/PsbA/D family. As to quaternary structure, PSII is composed of 1 copy each of membrane proteins PsbA, PsbB, PsbC, PsbD, PsbE, PsbF, PsbH, PsbI, PsbJ, PsbK, PsbL, PsbM, PsbT, PsbX, PsbY, Psb30/Ycf12, peripheral proteins PsbO, CyanoQ (PsbQ), PsbU, PsbV and a large number of cofactors. It forms dimeric complexes. Requires The D1/D2 heterodimer binds P680, chlorophylls that are the primary electron donor of PSII, and subsequent electron acceptors. It shares a non-heme iron and each subunit binds pheophytin, quinone, additional chlorophylls, carotenoids and lipids. D1 provides most of the ligands for the Mn4-Ca-O5 cluster of the oxygen-evolving complex (OEC). There is also a Cl(-1) ion associated with D1 and D2, which is required for oxygen evolution. The PSII complex binds additional chlorophylls, carotenoids and specific lipids. as cofactor. Post-translationally, tyr-162 forms a radical intermediate that is referred to as redox-active TyrZ, YZ or Y-Z. C-terminally processed by CtpA; processing is essential to allow assembly of the oxygen-evolving complex and thus photosynthetic growth.

The protein localises to the cellular thylakoid membrane. The enzyme catalyses 2 a plastoquinone + 4 hnu + 2 H2O = 2 a plastoquinol + O2. Photosystem II (PSII) is a light-driven water:plastoquinone oxidoreductase that uses light energy to abstract electrons from H(2)O, generating O(2) and a proton gradient subsequently used for ATP formation. It consists of a core antenna complex that captures photons, and an electron transfer chain that converts photonic excitation into a charge separation. The D1/D2 (PsbA/PsbD) reaction center heterodimer binds P680, the primary electron donor of PSII as well as several subsequent electron acceptors. This Prochlorococcus marinus (strain NATL1A) protein is Photosystem II protein D1.